A 408-amino-acid polypeptide reads, in one-letter code: Phosphoglycerate kinase (408 aa).

Substrate contacts are provided by residues 22-24 (DIN), arginine 39, 60-63 (HQSR), arginine 117, and arginine 157. ATP contacts are provided by residues glutamate 332 and 358–361 (GGHT).

This sequence belongs to the phosphoglycerate kinase family. As to quaternary structure, monomer.

It is found in the cytoplasm. The catalysed reaction is (2R)-3-phosphoglycerate + ATP = (2R)-3-phospho-glyceroyl phosphate + ADP. It functions in the pathway carbohydrate degradation; glycolysis; pyruvate from D-glyceraldehyde 3-phosphate: step 2/5. The protein is Phosphoglycerate kinase (pgk) of Thermoplasma acidophilum (strain ATCC 25905 / DSM 1728 / JCM 9062 / NBRC 15155 / AMRC-C165).